A 304-amino-acid polypeptide reads, in one-letter code: Acetylglutamate kinase (304 aa).

Residues G71 to G72, R93, and N193 each bind substrate.

This sequence belongs to the acetylglutamate kinase family. ArgB subfamily.

Its subcellular location is the cytoplasm. The catalysed reaction is N-acetyl-L-glutamate + ATP = N-acetyl-L-glutamyl 5-phosphate + ADP. It participates in amino-acid biosynthesis; L-arginine biosynthesis; N(2)-acetyl-L-ornithine from L-glutamate: step 2/4. Catalyzes the ATP-dependent phosphorylation of N-acetyl-L-glutamate. The polypeptide is Acetylglutamate kinase (Streptomyces avermitilis (strain ATCC 31267 / DSM 46492 / JCM 5070 / NBRC 14893 / NCIMB 12804 / NRRL 8165 / MA-4680)).